We begin with the raw amino-acid sequence, 506 residues long: Serine/threonine-protein kinase RIO1 (506 aa).

Residues 22–52 (TASSSSDDEPEQAVVKQEKLEAGEQIEEQYD) are disordered. Residues 142–506 (LNIDGCISTG…KKRAHRQHMK (365 aa)) enclose the Protein kinase domain. ATP is bound by residues 148 to 156 (ISTGKEANV), lysine 169, and leucine 241. Residue aspartate 285 is the Proton acceptor of the active site. An ATP-binding site is contributed by asparagine 290. 2 residues coordinate Mg(2+): asparagine 290 and aspartate 302. The active-site 4-aspartylphosphate intermediate is aspartate 302. The disordered stretch occupies residues 418–506 (GDGFGEEHDD…KKRAHRQHMK (89 aa)). A compositionally biased stretch (acidic residues) spans 424–435 (EHDDSDDNDDEE). Over residues 454–490 (EKERKIAMHTRNREETAEERKERKAAVKEEKREQRKE) the composition is skewed to basic and acidic residues. Over residues 491–506 (KIPKHLKKRAHRQHMK) the composition is skewed to basic residues.

Belongs to the protein kinase superfamily. RIO-type Ser/Thr kinase family. Mg(2+) is required as a cofactor. As to expression, expressed in vulva and uterine cells, uterine seam cells (utse), spermatheca and in the nervous system including chemosensory neurons in the head, nerve ring neurons (RID/RIF), inhibitory motor neurons (DA/DD/VA/VD), mechanosensory neurons (ALML/PLML) and tail sensory neurons (DVA//PDA). Also expressed in intestine and pharynx (procorpus) and rectal valve and gland.

The protein localises to the cytoplasm. It carries out the reaction L-seryl-[protein] + ATP = O-phospho-L-seryl-[protein] + ADP + H(+). The catalysed reaction is L-threonyl-[protein] + ATP = O-phospho-L-threonyl-[protein] + ADP + H(+). In terms of biological role, involved in the final steps of cytoplasmic maturation of the 40S ribosomal subunit. Despite the protein kinase domain is proposed to act predominantly as an ATPase. The catalytic activity regulates its dynamic association with the 40S subunit. Plays a role in oogenesis by regulating germ cell proliferation, progression through diplotene and diakinesis stages and oocyte maturation. Regulates germline development probably by regulating the phosphorylation of mpk-1. Involved in larval development. This Caenorhabditis elegans protein is Serine/threonine-protein kinase RIO1.